A 412-amino-acid chain; its full sequence is Inactive serine protease 35 (412 aa).

The N-terminal stretch at 1–23 (MGAMFFGLMLFTLGWTLIDGSES) is a signal peptide. N-linked (GlcNAc...) asparagine glycosylation is present at asparagine 110. The region spanning 124–407 (VYGTDSRFSI…ICLWMHGDDA (284 aa)) is the Peptidase S1 domain. Residues cysteine 154 and cysteine 170 are joined by a disulfide bond. Basic residues predominate over residues 192–207 (RNKGGGKRRRGSRRNR). Residues 192–246 (RNKGGGKRRRGSRRNRREVSGAGREGSQDSLKETAKAGRRRKGSARRQRAADGRP) form a disordered region. The span at 217 to 227 (GSQDSLKETAK) shows a compositional bias: basic and acidic residues. The span at 228–239 (AGRRRKGSARRQ) shows a compositional bias: basic residues.

The protein belongs to the peptidase S1 family.

It is found in the secreted. This chain is Inactive serine protease 35 (PRSS35), found in Bos taurus (Bovine).